A 429-amino-acid chain; its full sequence is Glutamyl-tRNA reductase (429 aa).

Substrate-binding positions include 50-53 (TCNR), serine 110, 115-117 (ETQ), and glutamine 121. Catalysis depends on cysteine 51, which acts as the Nucleophile. 190–195 (GAGEMA) lines the NADP(+) pocket.

This sequence belongs to the glutamyl-tRNA reductase family. As to quaternary structure, homodimer.

It catalyses the reaction (S)-4-amino-5-oxopentanoate + tRNA(Glu) + NADP(+) = L-glutamyl-tRNA(Glu) + NADPH + H(+). Its pathway is porphyrin-containing compound metabolism; protoporphyrin-IX biosynthesis; 5-aminolevulinate from L-glutamyl-tRNA(Glu): step 1/2. In terms of biological role, catalyzes the NADPH-dependent reduction of glutamyl-tRNA(Glu) to glutamate 1-semialdehyde (GSA). This Campylobacter hominis (strain ATCC BAA-381 / DSM 21671 / CCUG 45161 / LMG 19568 / NCTC 13146 / CH001A) protein is Glutamyl-tRNA reductase.